Reading from the N-terminus, the 91-residue chain is Small ribosomal subunit protein uS19 (91 aa).

It belongs to the universal ribosomal protein uS19 family.

In terms of biological role, protein S19 forms a complex with S13 that binds strongly to the 16S ribosomal RNA. The sequence is that of Small ribosomal subunit protein uS19 from Pseudomonas putida (strain ATCC 700007 / DSM 6899 / JCM 31910 / BCRC 17059 / LMG 24140 / F1).